We begin with the raw amino-acid sequence, 600 residues long: Elongation factor 4 (600 aa).

The region spanning 5 to 187 (KYIRNFSIIA…AIVNKLHPPK (183 aa)) is the tr-type G domain. Residues 17-22 (DHGKST) and 134-137 (NKID) each bind GTP.

Belongs to the TRAFAC class translation factor GTPase superfamily. Classic translation factor GTPase family. LepA subfamily.

The protein resides in the cell inner membrane. The catalysed reaction is GTP + H2O = GDP + phosphate + H(+). In terms of biological role, required for accurate and efficient protein synthesis under certain stress conditions. May act as a fidelity factor of the translation reaction, by catalyzing a one-codon backward translocation of tRNAs on improperly translocated ribosomes. Back-translocation proceeds from a post-translocation (POST) complex to a pre-translocation (PRE) complex, thus giving elongation factor G a second chance to translocate the tRNAs correctly. Binds to ribosomes in a GTP-dependent manner. In Rickettsia akari (strain Hartford), this protein is Elongation factor 4.